The following is a 532-amino-acid chain: Membrane protein insertase YidC (532 aa).

The next 5 helical transmembrane spans lie at 7–27 (FFIFAFLFVSFLLWQAWQSQM), 336–356 (LTILYSIIGNWGFSIILITFI), 413–433 (GGFLPIFIQMPIFLSLYYMLI), 450–470 (LSSQDPYYVLPVIMGLTMFFI), and 492–512 (PVIFTAFFLWFPSGLVLYYII).

The protein belongs to the OXA1/ALB3/YidC family. Type 1 subfamily. In terms of assembly, interacts with the Sec translocase complex via SecD. Specifically interacts with transmembrane segments of nascent integral membrane proteins during membrane integration.

It is found in the cell membrane. Functionally, required for the insertion and/or proper folding and/or complex formation of integral membrane proteins into the membrane. Involved in integration of membrane proteins that insert both dependently and independently of the Sec translocase complex, as well as at least some lipoproteins. Aids folding of multispanning membrane proteins. In Buchnera aphidicola subsp. Acyrthosiphon pisum (strain Tuc7), this protein is Membrane protein insertase YidC.